Here is a 317-residue protein sequence, read N- to C-terminus: Melanocyte-stimulating hormone receptor (317 aa).

The disordered stretch occupies residues 1 to 26 (MPVQGSPRSLLGAVNSTPTATPHLRP). The Extracellular segment spans residues 1–37 (MPVQGSPRSLLGAVNSTPTATPHLRPAANQTGPQCLE). Asparagine 29 carries an N-linked (GlcNAc...) asparagine glycan. A helical transmembrane segment spans residues 38–63 (VSIPDGLFLCLGLVSLVENTLVVAAI). The Cytoplasmic segment spans residues 64-72 (AKNRNLHSP). The chain crosses the membrane as a helical span at residues 73 to 93 (MYCFVCCLALSDLLVSVSSVL). Topologically, residues 94–118 (ETAVLLLLGAGALAAQATVVQLLGN) are extracellular. The chain crosses the membrane as a helical span at residues 119–140 (VIDVLLCSSMVSSLFFLGAIAM). Residues 141–163 (DRYISIFYALRYHSIVTLARARR) are Cytoplasmic-facing. A helical transmembrane segment spans residues 164-183 (AIAAIWAASMLSSTLFIAYC). Over 184-191 (DHTAALLC) the chain is Extracellular. The helical transmembrane segment at 192-211 (LVVFFLAMLVLMAVLYVHML) threads the bilayer. At 212-240 (TQACQHAQGIARLHKRQRPVQQGWGLKGA) the chain is on the cytoplasmic side. The helical transmembrane segment at 241–266 (ATLAILLGVFFLCWGPFFLHLTLIAV) threads the bilayer. The Extracellular portion of the chain corresponds to 267-279 (CPQHPTCSCIFKN). A helical membrane pass occupies residues 280 to 300 (FRLFLALIVCNAIVDPLIYAF). Topologically, residues 301–317 (RSQELCKTLKELLLFSW) are cytoplasmic.

Belongs to the G-protein coupled receptor 1 family. In terms of assembly, interacts with MGRN1, but does not undergo MGRN1-mediated ubiquitination; this interaction competes with GNAS-binding and thus inhibits agonist-induced cAMP production. Interacts with OPN3; the interaction results in a decrease in MC1R-mediated cAMP signaling and ultimately a decrease in melanin production in melanocytes.

The protein localises to the cell membrane. Receptor for MSH (alpha, beta and gamma) and ACTH. The activity of this receptor is mediated by G proteins which activate adenylate cyclase. Mediates melanogenesis, the production of eumelanin (black/brown) and phaeomelanin (red/yellow), via regulation of cAMP signaling in melanocytes. This is Melanocyte-stimulating hormone receptor (MC1R) from Hapalemur griseus (Gray gentle lemur).